The sequence spans 552 residues: Putative transport protein HAPS_0158 (552 aa).

Transmembrane regions (helical) follow at residues 4 to 24, 28 to 48, 65 to 85, 95 to 115, and 157 to 177; these read IALT…IGHI, GVSL…HFMT, FGLI…FFAS, AFAV…HKIF, and MGYA…MWLI. RCK C-terminal domains lie at 193–275 and 277–360; these read DSAT…ILGE and VNVS…IIGN. A run of 6 helical transmembrane segments spans residues 370–390, 393–413, 438–458, 463–483, 492–512, and 532–552; these read MLPI…PIYL, FPVA…LILA, IVLF…NTLL, LAWI…TGLV, YLSL…LAFA, and LVMF…WVAG.

This sequence belongs to the AAE transporter (TC 2.A.81) family. YidE subfamily.

The protein localises to the cell membrane. The protein is Putative transport protein HAPS_0158 of Glaesserella parasuis serovar 5 (strain SH0165) (Haemophilus parasuis).